We begin with the raw amino-acid sequence, 350 residues long: Calcium uniporter protein, mitochondrial (350 aa).

The transit peptide at 1–49 (MAAAAGRSLLLLLCSRGGGGGAGGCGALTAGCFPGLGVSRHRPHQQHRT) directs the protein to the mitochondrion. The Mitochondrial matrix segment spans residues 50-232 (AHQRPASWQS…ISRKAEKRTT (183 aa)). Phosphoserine; by CaMK2 is present on residues Ser-56 and Ser-91. Residues 74 to 164 (VTVVYQNGLP…LTYHVRPPKR (91 aa)) are N-terminal MCU domain. Position 96 is an S-glutathionyl cysteine (Cys-96). Positions 191 to 220 (IEQHQLNKERELVERLEDLKQQLAPLEKVR) form a coiled coil. The chain crosses the membrane as a helical span at residues 233-256 (LVLWGGLAYMATQFGILARLTWWE). The Mitochondrial intermembrane portion of the chain corresponds to 257 to 264 (YSWDIMEP). The Selectivity filter motif lies at 259–267 (WDIMEPVTY). Ca(2+) is bound at residue Glu-263. Residues 265–282 (VTYFITYGSAMAMYAYFV) form a helical membrane-spanning segment. The Mitochondrial matrix portion of the chain corresponds to 283 to 350 (MTRQEYVYPE…LPLRQIGEKE (68 aa)). The tract at residues 284 to 289 (TRQEYV) is juxtamembrane helix. A coiled-coil region spans residues 310–338 (RFDLEKYNQLKDAIAQAEMDLKRLRDPLQ). Lys-331 is subject to N6-acetyllysine.

It belongs to the MCU (TC 1.A.77) family. Homotetramer. Component of the uniplex complex, composed of MCU, EMRE/SMDT1, MICU1 and MICU2 (or MICU3) in a 4:4:1:1 stoichiometry. Interacts with CCDC109B/MCUB; this inhibits channel activity. Interacts with MCUR1. Interactions with MICU1 and MCUR1 are mutually exclusive. Interacts with SLC25A23. Post-translationally, phosphorylation by CaMK2 in heart leads to increased MCU current. The regulation of MCU by CaMK2 is however subject to discussion: another group was unable to reproduce these results. Phosphorylated on tyrosines by PTK2B/PYK2, promoting oligomerization. In terms of processing, glutathionylation at Cys-96 in response to reactive oxygen species (ROS) promotes MCU higher-order assembly, leading to constitutive activation of the MCU channel and mitochondrial calcium overload. Undergoes proteolytic degradation by SPG7. Detected in heart muscle (at protein level). Expressed in skeletal muscle, heart, kidney, liver, brain, lung, white fat and spleen.

It localises to the mitochondrion inner membrane. The enzyme catalyses Ca(2+)(in) = Ca(2+)(out). With respect to regulation, MCU channel activity is regulated by the heterodimer composed of MICU1 and either MICU2 or MICU3, which act as calcium-sensors. At low calcium levels, MICU1 occludes the pore of the MCU channel, preventing mitochondrial calcium uptake. At higher calcium levels, calcium-binding to MICU1 and MICU2 (or MICU3) induces a conformational change that weakens MCU-MICU1 interactions and moves the MICU1-MICU2 heterodimer away from the pore, allowing calcium permeation through the channel. MCU channel activity is gated by EMRE/SMDT1 via the juxtamembrane helix loop. Inhibited by ruthenium red or its derivative Ru360. In terms of biological role, channel-forming and calcium-conducting subunit of the mitochondrial inner membrane calcium uniporter complex (uniplex), which mediates calcium uptake into the mitochondrial matrix. MCU channel activity is regulated by the calcium-sensor subunits of the uniplex MICU1 and MICU2 (or MICU3). Mitochondrial calcium homeostasis plays key roles in cellular physiology and regulates ATP production, cytoplasmic calcium signals and activation of cell death pathways. Involved in buffering the amplitude of systolic calcium rises in cardiomyocytes. While dispensable for baseline homeostatic cardiac function, acts as a key regulator of short-term mitochondrial calcium loading underlying a 'fight-or-flight' response during acute stress: acts by mediating a rapid increase of mitochondrial calcium in pacemaker cells. Participates in mitochondrial permeability transition during ischemia-reperfusion injury. Mitochondrial calcium uptake in skeletal muscle cells is involved in muscle size in adults. Regulates synaptic vesicle endocytosis kinetics in central nerve terminal. Regulates glucose-dependent insulin secretion in pancreatic beta-cells by regulating mitochondrial calcium uptake. Involved in antigen processing and presentation. In Mus musculus (Mouse), this protein is Calcium uniporter protein, mitochondrial.